The primary structure comprises 89 residues: Small ribosomal subunit protein uS15 (89 aa).

The protein belongs to the universal ribosomal protein uS15 family. As to quaternary structure, part of the 30S ribosomal subunit. Forms a bridge to the 50S subunit in the 70S ribosome, contacting the 23S rRNA.

One of the primary rRNA binding proteins, it binds directly to 16S rRNA where it helps nucleate assembly of the platform of the 30S subunit by binding and bridging several RNA helices of the 16S rRNA. In terms of biological role, forms an intersubunit bridge (bridge B4) with the 23S rRNA of the 50S subunit in the ribosome. This is Small ribosomal subunit protein uS15 from Bartonella tribocorum (strain CIP 105476 / IBS 506).